Here is a 568-residue protein sequence, read N- to C-terminus: MATEEMREKSLKREAESLWDIPPESYASKACSCMGTAAQLVMVAVLGSFQFGFNLSALNTSKAFIILDFGWCKDENGGHYSDCDTGLVYGSLINTAVFLGACVGCLLGGRLTDFGRRASLIFTHCVCTLGCILSAAAEGFPTLLIARLVVGVAVGMFTVCVPMYLSEVTPDDRRGYFGTFHQLFITLGIFFGTLLGLAFGNAPAGDEVYEVSTFQQAWWRVMLGLPAVVSLLAIWLLWFVFPFETPQYMVEKKQRAKATALLREIYGRDNVDVEIQRIVTSRYQQKIQRAQQLTVWKAIVHPTYRSVILLACLLSIMQQFTGINVLVANSNNLYSSLKLPQDAVTGLTVGFTALNVFLTVITIPLVDRLGRRTLLLFSEAVMFVAMGIAFVANLVDQSNTAVQWVTVACVYVFIVGFAVGYGPVLWIYIHEIFPPEIKQGAASLASALNWVATVAIVLPSDFLLKQGFSVFVGICTVALAIIFVVTFIFVKETKGLSIEESPYFKGKSRALGSPSAFRMELNSSPSVPLTRGEGAAASAEKGMGLTDAAAMNGGRGVSDDLTKGTEVV.

Residues 1–32 (MATEEMREKSLKREAESLWDIPPESYASKACS) lie on the Cytoplasmic side of the membrane. A helical transmembrane segment spans residues 33-53 (CMGTAAQLVMVAVLGSFQFGF). The Extracellular portion of the chain corresponds to 54-86 (NLSALNTSKAFIILDFGWCKDENGGHYSDCDTG). Cysteine 72 and cysteine 83 are oxidised to a cystine. The chain crosses the membrane as a helical span at residues 87 to 107 (LVYGSLINTAVFLGACVGCLL). The Cytoplasmic portion of the chain corresponds to 108-119 (GGRLTDFGRRAS). Residues 120–140 (LIFTHCVCTLGCILSAAAEGF) form a helical membrane-spanning segment. Residues 141–142 (PT) lie on the Extracellular side of the membrane. A helical transmembrane segment spans residues 143 to 163 (LLIARLVVGVAVGMFTVCVPM). Over 164–182 (YLSEVTPDDRRGYFGTFHQ) the chain is Cytoplasmic. Glutamine 182 contributes to the alpha-D-glucose binding site. Residue glutamine 182 coordinates beta-D-glucose. The chain crosses the membrane as a helical span at residues 183–203 (LFITLGIFFGTLLGLAFGNAP). At 204 to 220 (AGDEVYEVSTFQQAWWR) the chain is on the extracellular side. Residues 221 to 241 (VMLGLPAVVSLLAIWLLWFVF) traverse the membrane as a helical segment. The Cytoplasmic portion of the chain corresponds to 242–306 (PFETPQYMVE…KAIVHPTYRS (65 aa)). Residues 307–327 (VILLACLLSIMQQFTGINVLV) form a helical membrane-spanning segment. Alpha-D-glucose-binding residues include glutamine 318, glutamine 319, and asparagine 324. Residue glutamine 318 coordinates beta-D-glucose. Position 324 (asparagine 324) interacts with beta-D-glucose. Residues 328 to 345 (ANSNNLYSSLKLPQDAVT) are Extracellular-facing. A helical membrane pass occupies residues 346–366 (GLTVGFTALNVFLTVITIPLV). Asparagine 355 serves as a coordination point for beta-D-glucose. Over 367-374 (DRLGRRTL) the chain is Cytoplasmic. The chain crosses the membrane as a helical span at residues 375–395 (LLFSEAVMFVAMGIAFVANLV). At 396–406 (DQSNTAVQWVT) the chain is on the extracellular side. Residues 407 to 427 (VACVYVFIVGFAVGYGPVLWI) form a helical membrane-spanning segment. Alpha-D-glucose is bound at residue tryptophan 426. The Cytoplasmic portion of the chain corresponds to 428 to 443 (YIHEIFPPEIKQGAAS). A helical membrane pass occupies residues 444-464 (LASALNWVATVAIVLPSDFLL). The Extracellular portion of the chain corresponds to 465–469 (KQGFS). The chain crosses the membrane as a helical span at residues 470–490 (VFVGICTVALAIIFVVTFIFV). Over 491-568 (KETKGLSIEE…DDLTKGTEVV (78 aa)) the chain is Cytoplasmic.

The protein belongs to the major facilitator superfamily. Sugar transporter (TC 2.A.1.1) family. Homodimer.

It localises to the cell membrane. The catalysed reaction is D-glucose(out) = D-glucose(in). It catalyses the reaction D-fructose(out) = D-fructose(in). The enzyme catalyses D-galactose(in) = D-galactose(out). It carries out the reaction D-mannose(out) = D-mannose(in). The catalysed reaction is D-glucosamine(out) = D-glucosamine(in). It catalyses the reaction D-xylose(out) = D-xylose(in). With respect to regulation, inhibited by cytochalasin B. In terms of biological role, sodium-independent facilitative hexose transporter. Can transport D-glucose and D-mannose with high affinity, and D-fructose and D-galactose with low affinity. Can transport D-xylose and D-glucosamine. In Toxoplasma gondii, this protein is Hexose transporter 1.